Here is a 366-residue protein sequence, read N- to C-terminus: Probable quinol oxidase subunit 2 (366 aa).

The first 19 residues, 1 to 19 (MSKFKSLLLLFGTLILLSG), serve as a signal peptide directing secretion. C20 carries N-palmitoyl cysteine lipidation. A lipid anchor (S-diacylglycerol cysteine) is attached at C20. Transmembrane regions (helical) follow at residues 38-58 (FLIL…LGMF) and 80-100 (AIIE…LAIP). Positions 330–366 (EPYNNEFKKDESKNAKEMKKISKDAQDQDNDDHGGGH) are disordered. The span at 335–366 (EFKKDESKNAKEMKKISKDAQDQDNDDHGGGH) shows a compositional bias: basic and acidic residues.

The protein belongs to the cytochrome c oxidase subunit 2 family.

It localises to the cell membrane. The catalysed reaction is 2 a quinol + O2 = 2 a quinone + 2 H2O. Its function is as follows. Catalyzes quinol oxidation with the concomitant reduction of oxygen to water. Subunit II transfers the electrons from a quinol to the binuclear center of the catalytic subunit I. The sequence is that of Probable quinol oxidase subunit 2 (qoxA) from Staphylococcus aureus (strain USA300).